Consider the following 860-residue polypeptide: Leucine--tRNA ligase (860 aa).

Positions 42-52 (PYPSGRLHMGH) match the 'HIGH' region motif. The 'KMSKS' region signature appears at 619–623 (KMSKS). Residue lysine 622 coordinates ATP.

It belongs to the class-I aminoacyl-tRNA synthetase family.

The protein localises to the cytoplasm. The catalysed reaction is tRNA(Leu) + L-leucine + ATP = L-leucyl-tRNA(Leu) + AMP + diphosphate. This chain is Leucine--tRNA ligase, found in Yersinia pseudotuberculosis serotype I (strain IP32953).